The chain runs to 142 residues: RNA-directed DNA polymerase homolog (142 aa).

Its subcellular location is the mitochondrion. It carries out the reaction RNA(n) + a ribonucleoside 5'-triphosphate = RNA(n+1) + diphosphate. The chain is RNA-directed DNA polymerase homolog from Oenothera berteroana (Bertero's evening primrose).